A 251-amino-acid chain; its full sequence is Hydroxyacylglutathione hydrolase (251 aa).

Zn(2+)-binding residues include H53, H55, D57, H58, H110, D127, and H165.

This sequence belongs to the metallo-beta-lactamase superfamily. Glyoxalase II family. Monomer. Zn(2+) serves as cofactor.

The enzyme catalyses an S-(2-hydroxyacyl)glutathione + H2O = a 2-hydroxy carboxylate + glutathione + H(+). Its pathway is secondary metabolite metabolism; methylglyoxal degradation; (R)-lactate from methylglyoxal: step 2/2. Functionally, thiolesterase that catalyzes the hydrolysis of S-D-lactoyl-glutathione to form glutathione and D-lactic acid. The sequence is that of Hydroxyacylglutathione hydrolase from Yersinia enterocolitica serotype O:8 / biotype 1B (strain NCTC 13174 / 8081).